Consider the following 110-residue polypeptide: MSEGSFEDRELEEIRRKKLEELQKKAELERQAQIVAAQRRIALKKILTPEALARLDNIRVVRPELAEALEQQLINLAATGRVRVPIDEETLKKILEAVYSQTRREYRFRL.

The protein belongs to the PDCD5 family.

This chain is DNA-binding protein PAE3044, found in Pyrobaculum aerophilum (strain ATCC 51768 / DSM 7523 / JCM 9630 / CIP 104966 / NBRC 100827 / IM2).